The sequence spans 412 residues: Sulfhydrogenase 2 subunit alpha (412 aa).

Ni(2+) contacts are provided by Cys60, Cys63, Cys402, and Cys405. Cys63 is a Fe cation binding site. Cys405 contributes to the Fe cation binding site.

The protein belongs to the [NiFe]/[NiFeSe] hydrogenase large subunit family. In terms of assembly, dimer of heterotetramer of alpha, beta, gamma and delta subunits. The nickel-containing alpha and delta subunits constitute the hydrogenase activity. The beta and gamma subunits (flavin-containing dimer) constitute the sulfur reductase activity. Ni(2+) is required as a cofactor. Fe cation serves as cofactor.

Its subcellular location is the cytoplasm. It catalyses the reaction H2 + NADP(+) = NADPH + H(+). The catalysed reaction is H2 + NAD(+) = NADH + H(+). Functionally, part of a bifunctional enzyme complex that functions as a hydrogen-evolving hydrogenase with sulfur-reducing activity. May play a role in hydrogen cycling during fermentative growth. Activity exhibited with NAD in addition to NADPH. The alpha and delta subunits form the hydrogenase component that catalyzes the reduction of protons to evolve hydrogen. The chain is Sulfhydrogenase 2 subunit alpha from Pyrococcus furiosus (strain ATCC 43587 / DSM 3638 / JCM 8422 / Vc1).